We begin with the raw amino-acid sequence, 247 residues long: ATP synthase subunit a, chloroplastic (247 aa).

5 consecutive transmembrane segments (helical) span residues 38-58 (QVLI…ILVV), 95-115 (VPFI…GALL), 134-154 (INTT…AGIS), 199-219 (LVVV…VMFL), and 220-240 (GLFT…AYIG).

Belongs to the ATPase A chain family. As to quaternary structure, F-type ATPases have 2 components, CF(1) - the catalytic core - and CF(0) - the membrane proton channel. CF(1) has five subunits: alpha(3), beta(3), gamma(1), delta(1), epsilon(1). CF(0) has four main subunits: a, b, b' and c.

The protein resides in the plastid. Its subcellular location is the chloroplast thylakoid membrane. Key component of the proton channel; it plays a direct role in the translocation of protons across the membrane. The polypeptide is ATP synthase subunit a, chloroplastic (Lotus japonicus (Lotus corniculatus var. japonicus)).